Reading from the N-terminus, the 196-residue chain is ATP-dependent Clp protease proteolytic subunit (196 aa).

The active-site Nucleophile is the Ser98. His123 is a catalytic residue.

It belongs to the peptidase S14 family. In terms of assembly, fourteen ClpP subunits assemble into 2 heptameric rings which stack back to back to give a disk-like structure with a central cavity, resembling the structure of eukaryotic proteasomes.

It localises to the cytoplasm. It carries out the reaction Hydrolysis of proteins to small peptides in the presence of ATP and magnesium. alpha-casein is the usual test substrate. In the absence of ATP, only oligopeptides shorter than five residues are hydrolyzed (such as succinyl-Leu-Tyr-|-NHMec, and Leu-Tyr-Leu-|-Tyr-Trp, in which cleavage of the -Tyr-|-Leu- and -Tyr-|-Trp bonds also occurs).. Cleaves peptides in various proteins in a process that requires ATP hydrolysis. Has a chymotrypsin-like activity. Plays a major role in the degradation of misfolded proteins. This is ATP-dependent Clp protease proteolytic subunit from Actinobacillus pleuropneumoniae serotype 5b (strain L20).